A 341-amino-acid chain; its full sequence is MKFLDQAKIYIRSGNGGAGAVSFRREKFLEFGGPDGGDGGRGGDVWVEAVDGLNTLIDYRYQQHFKAKTGMHGMGRNMTGGKGDDVVLRVPVGTQIFEEDNETLICDITEVGQRYRLAKGGNGGFGNLHFTTSTNRAPRRANPGQEGIERTIWLRLKLIADAGLVGLPNAGKSTFLASVTAAKPKIADYPFTTLHPNLGVARIDGREFVIADIPGLIEGASEGVGLGDRFLGHVERTRVLLHLVSAQEEDVAKAYQVIRGELEAYEHGLADKPEIVALSQVDTLDPETRKAKVKALKKACGCEPLLLSAVSHEGLNDTLRQLARIIDLSRAEEAGTAQAEE.

The region spanning 1 to 159 (MKFLDQAKIY…RTIWLRLKLI (159 aa)) is the Obg domain. One can recognise an OBG-type G domain in the interval 160–327 (ADAGLVGLPN…TLRQLARIID (168 aa)). Residues 166 to 173 (GLPNAGKS), 191 to 195 (FTTLH), 212 to 215 (DIPG), 279 to 282 (SQVD), and 308 to 310 (SAV) each bind GTP. Mg(2+) is bound by residues Ser173 and Thr193.

This sequence belongs to the TRAFAC class OBG-HflX-like GTPase superfamily. OBG GTPase family. Monomer. Mg(2+) is required as a cofactor.

The protein localises to the cytoplasm. An essential GTPase which binds GTP, GDP and possibly (p)ppGpp with moderate affinity, with high nucleotide exchange rates and a fairly low GTP hydrolysis rate. Plays a role in control of the cell cycle, stress response, ribosome biogenesis and in those bacteria that undergo differentiation, in morphogenesis control. This chain is GTPase Obg, found in Brucella abortus biovar 1 (strain 9-941).